Here is a 494-residue protein sequence, read N- to C-terminus: MEYRVKSTALLDIKSNIIIGLYENGELSPSAQKIDEISQGYLSKLIQSGEIKGKLGQVLVLRHVPNYSAERVFVVGAGKKGEINEKQFKQLIQDTINAVKATSAKEVISYLSDIKIKDRDLYWNIRFSVETLETSIYQFEQFKSKKSEQDVALTDVIFSAEGDVAQQAVNHAKAIALGVRAAKDVANCPPNVCNPVYLAEQANALATRSDLIKTTVLGEKDMADLGMNAYLAVSQGSVNEAQLSLIEYRNHPNPDAKPIVLVGKGLTFDAGGISLKPAEGMDEMKYDMGGAASVYGVMNAIAELKLPLNVIGVLAGCENLPDGNAYRPGDILTTMKGLTVEVLNTDAEGRLVLCDTLTYVERFEPELVIDVATLTGACVVALGAHNSGLISTDDKLAKDLELAAAQSTDKAWRLPLGEEYQEQLKSNFADLANIGGRWGGAITAGAFLSNFTDKYRWAHLDIAGTAWLQGANKGATGRPVPLLVQFLINQATGK.

2 residues coordinate Mn(2+): Lys264 and Asp269. Residue Lys276 is part of the active site. Mn(2+) is bound by residues Asp287, Asp346, and Glu348. Residue Arg350 is part of the active site.

The protein belongs to the peptidase M17 family. It depends on Mn(2+) as a cofactor.

The protein localises to the cytoplasm. It catalyses the reaction Release of an N-terminal amino acid, Xaa-|-Yaa-, in which Xaa is preferably Leu, but may be other amino acids including Pro although not Arg or Lys, and Yaa may be Pro. Amino acid amides and methyl esters are also readily hydrolyzed, but rates on arylamides are exceedingly low.. It carries out the reaction Release of an N-terminal amino acid, preferentially leucine, but not glutamic or aspartic acids.. Its function is as follows. Presumably involved in the processing and regular turnover of intracellular proteins. Catalyzes the removal of unsubstituted N-terminal amino acids from various peptides. This chain is Probable cytosol aminopeptidase (pepA), found in Pasteurella multocida (strain Pm70).